The primary structure comprises 199 residues: Large ribosomal subunit protein bL25 (199 aa).

It belongs to the bacterial ribosomal protein bL25 family. CTC subfamily. As to quaternary structure, part of the 50S ribosomal subunit; part of the 5S rRNA/L5/L18/L25 subcomplex. Contacts the 5S rRNA. Binds to the 5S rRNA independently of L5 and L18.

Its function is as follows. This is one of the proteins that binds to the 5S RNA in the ribosome where it forms part of the central protuberance. The chain is Large ribosomal subunit protein bL25 from Syntrophobacter fumaroxidans (strain DSM 10017 / MPOB).